The chain runs to 409 residues: Putative integrase/recombinase y4rA (409 aa).

Positions 112–197 constitute a Core-binding (CB) domain; sequence SAVEQHVQAY…ALRSFLSYAR (86 aa). The region spanning 220–402 is the Tyr recombinase domain; that stretch reads SIPRAIGRDD…DLDALRTLAL (183 aa). Residues arginine 260, lysine 284, histidine 354, arginine 357, and histidine 380 contribute to the active site. Tyrosine 389 acts as the O-(3'-phospho-DNA)-tyrosine intermediate in catalysis.

This sequence belongs to the 'phage' integrase family.

The protein is Putative integrase/recombinase y4rA of Sinorhizobium fredii (strain NBRC 101917 / NGR234).